A 665-amino-acid polypeptide reads, in one-letter code: Translation factor GUF1 homolog, mitochondrial (665 aa).

The N-terminal 35 residues, 1–35 (MAGAAVLRRSARRIYRHLAAAPAFSRSVLQQPKRL), are a transit peptide targeting the mitochondrion. Positions 34 to 53 (RLLSSQSSPEHGARGAVSGS) are disordered. In terms of domain architecture, tr-type G spans 61 to 249 (ERVRNFSIIA…AVIERIPSPP (189 aa)). GTP is bound by residues 70–77 (AHVDHGKS), 142–146 (DTPGH), and 196–199 (NKID).

This sequence belongs to the TRAFAC class translation factor GTPase superfamily. Classic translation factor GTPase family. LepA subfamily.

It localises to the mitochondrion inner membrane. It carries out the reaction GTP + H2O = GDP + phosphate + H(+). Promotes mitochondrial protein synthesis. May act as a fidelity factor of the translation reaction, by catalyzing a one-codon backward translocation of tRNAs on improperly translocated ribosomes. Binds to mitochondrial ribosomes in a GTP-dependent manner. This Sorghum bicolor (Sorghum) protein is Translation factor GUF1 homolog, mitochondrial.